Here is a 425-residue protein sequence, read N- to C-terminus: UPF0761 membrane protein xcc-b100_3490 (425 aa).

6 helical membrane passes run 48-68 (VFAL…FPAF), 105-125 (FTVA…HSIE), 154-174 (GTML…LPLF), 182-202 (LAEF…IVLI), 216-236 (ALPG…GFGF), and 250-270 (ALSA…SVLL).

The protein belongs to the UPF0761 family.

It localises to the cell inner membrane. This chain is UPF0761 membrane protein xcc-b100_3490, found in Xanthomonas campestris pv. campestris (strain B100).